Here is a 616-residue protein sequence, read N- to C-terminus: Dihydroxy-acid dehydratase (616 aa).

Aspartate 81 provides a ligand contact to Mg(2+). [2Fe-2S] cluster is bound at residue cysteine 122. Mg(2+) is bound by residues aspartate 123 and lysine 124. Lysine 124 bears the N6-carboxylysine mark. Cysteine 197 is a [2Fe-2S] cluster binding site. Residue glutamate 493 coordinates Mg(2+). Serine 519 acts as the Proton acceptor in catalysis.

This sequence belongs to the IlvD/Edd family. Homodimer. It depends on [2Fe-2S] cluster as a cofactor. Requires Mg(2+) as cofactor.

The catalysed reaction is (2R)-2,3-dihydroxy-3-methylbutanoate = 3-methyl-2-oxobutanoate + H2O. The enzyme catalyses (2R,3R)-2,3-dihydroxy-3-methylpentanoate = (S)-3-methyl-2-oxopentanoate + H2O. The protein operates within amino-acid biosynthesis; L-isoleucine biosynthesis; L-isoleucine from 2-oxobutanoate: step 3/4. Its pathway is amino-acid biosynthesis; L-valine biosynthesis; L-valine from pyruvate: step 3/4. Functions in the biosynthesis of branched-chain amino acids. Catalyzes the dehydration of (2R,3R)-2,3-dihydroxy-3-methylpentanoate (2,3-dihydroxy-3-methylvalerate) into 2-oxo-3-methylpentanoate (2-oxo-3-methylvalerate) and of (2R)-2,3-dihydroxy-3-methylbutanoate (2,3-dihydroxyisovalerate) into 2-oxo-3-methylbutanoate (2-oxoisovalerate), the penultimate precursor to L-isoleucine and L-valine, respectively. This is Dihydroxy-acid dehydratase from Corynebacterium kroppenstedtii (strain DSM 44385 / JCM 11950 / CIP 105744 / CCUG 35717).